Consider the following 699-residue polypeptide: tRNA wybutosine-synthesizing protein 4 (699 aa).

S-adenosyl-L-methionine-binding positions include R94, G120, D151, 197-198, and E224; that span reads DL.

This sequence belongs to the methyltransferase superfamily. LCMT family.

It catalyses the reaction 7-[(3S)-3-amino-3-carboxypropyl]wyosine(37) in tRNA(Phe) + S-adenosyl-L-methionine = 7-[(3S)-(3-amino-3-methoxycarbonyl)propyl]wyosine(37) in tRNA(Phe) + S-adenosyl-L-homocysteine. It carries out the reaction 7-[(3S)-(3-amino-3-methoxycarbonyl)propyl]wyosine(37) in tRNA(Phe) + S-adenosyl-L-methionine + CO2 = wybutosine(37) in tRNA(Phe) + S-adenosyl-L-homocysteine + 2 H(+). It functions in the pathway tRNA modification; wybutosine-tRNA(Phe) biosynthesis. In terms of biological role, probable S-adenosyl-L-methionine-dependent methyltransferase that acts as a component of the wybutosine biosynthesis pathway. Wybutosine is a hyper modified guanosine with a tricyclic base found at the 3'-position adjacent to the anticodon of eukaryotic phenylalanine tRNA. May methylate the carboxyl group of leucine residues to form alpha-leucine ester residues. This chain is tRNA wybutosine-synthesizing protein 4 (PPM2), found in Eremothecium gossypii (strain ATCC 10895 / CBS 109.51 / FGSC 9923 / NRRL Y-1056) (Yeast).